Here is a 1543-residue protein sequence, read N- to C-terminus: DNA-directed RNA polymerase subunit beta' (1543 aa).

4 residues coordinate Zn(2+): Cys-60, Cys-62, Cys-75, and Cys-78. Residues Asp-627, Asp-629, and Asp-631 each coordinate Mg(2+). Residues Cys-1017, Cys-1097, Cys-1104, and Cys-1107 each coordinate Zn(2+). Disordered stretches follow at residues 1466 to 1490 (PADREVPAATPAPAVMSEPKPAPPR) and 1522 to 1543 (AEEGRKPTLSELLGTDEDEENV).

It belongs to the RNA polymerase beta' chain family. In terms of assembly, the RNAP catalytic core consists of 2 alpha, 1 beta, 1 beta' and 1 omega subunit. When a sigma factor is associated with the core the holoenzyme is formed, which can initiate transcription. The cofactor is Mg(2+). Zn(2+) is required as a cofactor.

The catalysed reaction is RNA(n) + a ribonucleoside 5'-triphosphate = RNA(n+1) + diphosphate. In terms of biological role, DNA-dependent RNA polymerase catalyzes the transcription of DNA into RNA using the four ribonucleoside triphosphates as substrates. In Herpetosiphon aurantiacus (strain ATCC 23779 / DSM 785 / 114-95), this protein is DNA-directed RNA polymerase subunit beta'.